The chain runs to 213 residues: Protein GET1 (213 aa).

At Met-1 to Leu-4 the chain is on the lumenal side. Residues Leu-5–Ser-24 form a helical membrane-spanning segment. The Cytoplasmic portion of the chain corresponds to Thr-25–Arg-110. Positions Thr-41–Gln-68 form a coiled coil. A helical membrane pass occupies residues Trp-111–Phe-131. Residues Trp-132 to Ser-155 lie on the Lumenal side of the membrane. A helical transmembrane segment spans residues Val-156 to Ala-172. The Cytoplasmic segment spans residues Ala-173–Leu-213.

Belongs to the WRB/GET1 family. Interacts with GET3.

The protein resides in the endoplasmic reticulum membrane. Required for the post-translational delivery of tail-anchored (TA) proteins to the endoplasmic reticulum. Acts as a membrane receptor for soluble GET3, which recognizes and selectively binds the transmembrane domain of TA proteins in the cytosol. The polypeptide is Protein GET1 (Phaeosphaeria nodorum (strain SN15 / ATCC MYA-4574 / FGSC 10173) (Glume blotch fungus)).